The chain runs to 456 residues: Maturase-like protein 1 (456 aa).

The protein to group II intron maturases.

The protein resides in the plastid. Functionally, could be required for group III intron excision. This is Maturase-like protein 1 (mat1) from Euglena longa (Euglenophycean alga).